The following is a 130-amino-acid chain: MADVRYYGTGRRKHAAARVFLVAGDGKVTVNGRDISEYFGYETLIMTAKEPLVLTETEGKYDIMVTVKGGGFTGQAGAIRHGISRALLQADPDFRGTLKAKGFLTRDARMKERKKYGLKAARRAPQFSKR.

The protein belongs to the universal ribosomal protein uS9 family.

The polypeptide is Small ribosomal subunit protein uS9 (Exiguobacterium sibiricum (strain DSM 17290 / CCUG 55495 / CIP 109462 / JCM 13490 / 255-15)).